A 112-amino-acid polypeptide reads, in one-letter code: Urease subunit beta (112 aa).

Belongs to the urease beta subunit family. In terms of assembly, heterotrimer of UreA (gamma), UreB (beta) and UreC (alpha) subunits. Three heterotrimers associate to form the active enzyme.

Its subcellular location is the cytoplasm. It carries out the reaction urea + 2 H2O + H(+) = hydrogencarbonate + 2 NH4(+). It functions in the pathway nitrogen metabolism; urea degradation; CO(2) and NH(3) from urea (urease route): step 1/1. The sequence is that of Urease subunit beta from Polaromonas sp. (strain JS666 / ATCC BAA-500).